Reading from the N-terminus, the 469-residue chain is MNTNQRIITIGTICLIVGIISLLLQIGNIILLWMSHSIQTGEKSHPKVCNQSVITYENNTWVNQTYVNISNTNIAAGQGVTPIILAGNSSLCPISGWAIYSKDNSIRIGSKGDIFVMREPFISCSHLECRTFFLTQGALLNDRHSNGTVKDRSPYRTLMSCPIGEAPSPYNSRFESVAWSASACHDGMGWLTIGISGPDNGAVAVLKYNGIITDTIKSWRNKILRTQESECVCINGSCFTIMTDGPSNGQASYKLFKMEKGKIIKSIELDAPNYHYEECSCYPDTGKVVCVCRDNWHASNRPWVSFDQNLDYQIGYICSGVFGDNPRSNDGKGNCGPVLSNGANGVKGFSFRYGNGVWIGRTKSISSRRGFEMIWDPNGWTETDSSFSMKQDIIALTDWSGYSGSFVQHPELTGMNCIRPCFWVELIRGQPKESTIWTSGSSISFCGVNSGTASWSWPDGADLPFTIDK.

The Intravirion portion of the chain corresponds to 1–12; the sequence is MNTNQRIITIGT. An involved in apical transport and lipid raft association region spans residues 11 to 33; that stretch reads GTICLIVGIISLLLQIGNIILLW. A helical transmembrane segment spans residues 13–33; it reads ICLIVGIISLLLQIGNIILLW. Residues 34-469 lie on the Virion surface side of the membrane; it reads MSHSIQTGEK…GADLPFTIDK (436 aa). The hypervariable stalk region stretch occupies residues 36–90; that stretch reads HSIQTGEKSHPKVCNQSVITYENNTWVNQTYVNISNTNIAAGQGVTPIILAGNSS. Residues asparagine 50, asparagine 58, asparagine 63, asparagine 68, and asparagine 88 are each glycosylated (N-linked (GlcNAc...) asparagine; by host). A head of neuraminidase region spans residues 91 to 469; that stretch reads LCPISGWAIY…GADLPFTIDK (379 aa). 8 disulfide bridges follow: cysteine 92/cysteine 417, cysteine 124/cysteine 129, cysteine 184/cysteine 231, cysteine 233/cysteine 238, cysteine 279/cysteine 292, cysteine 281/cysteine 290, cysteine 318/cysteine 335, and cysteine 421/cysteine 446. Arginine 118 serves as a coordination point for substrate. N-linked (GlcNAc...) asparagine; by host glycosylation is present at asparagine 146. Aspartate 151 functions as the Proton donor/acceptor in the catalytic mechanism. Arginine 152 lines the substrate pocket. N-linked (GlcNAc...) asparagine; by host glycosylation occurs at asparagine 235. Residue 277–278 coordinates substrate; the sequence is EE. Arginine 293 provides a ligand contact to substrate. Residues aspartate 294, aspartate 324, and asparagine 344 each contribute to the Ca(2+) site. Position 368 (arginine 368) interacts with substrate. Catalysis depends on tyrosine 402, which acts as the Nucleophile.

Belongs to the glycosyl hydrolase 34 family. Homotetramer. Ca(2+) is required as a cofactor. Post-translationally, N-glycosylated.

The protein localises to the virion membrane. Its subcellular location is the host apical cell membrane. It carries out the reaction Hydrolysis of alpha-(2-&gt;3)-, alpha-(2-&gt;6)-, alpha-(2-&gt;8)- glycosidic linkages of terminal sialic acid residues in oligosaccharides, glycoproteins, glycolipids, colominic acid and synthetic substrates.. Its activity is regulated as follows. Inhibited by the neuraminidase inhibitors zanamivir (Relenza) and oseltamivir (Tamiflu). These drugs interfere with the release of progeny virus from infected cells and are effective against all influenza strains. Resistance to neuraminidase inhibitors is quite rare. In terms of biological role, catalyzes the removal of terminal sialic acid residues from viral and cellular glycoconjugates. Cleaves off the terminal sialic acids on the glycosylated HA during virus budding to facilitate virus release. Additionally helps virus spread through the circulation by further removing sialic acids from the cell surface. These cleavages prevent self-aggregation and ensure the efficient spread of the progeny virus from cell to cell. Otherwise, infection would be limited to one round of replication. Described as a receptor-destroying enzyme because it cleaves a terminal sialic acid from the cellular receptors. May facilitate viral invasion of the upper airways by cleaving the sialic acid moieties on the mucin of the airway epithelial cells. Likely to plays a role in the budding process through its association with lipid rafts during intracellular transport. May additionally display a raft-association independent effect on budding. Plays a role in the determination of host range restriction on replication and virulence. Sialidase activity in late endosome/lysosome traffic seems to enhance virus replication. In Influenza A virus (strain A/New Jersey/8/1976 H1N1), this protein is Neuraminidase.